A 685-amino-acid polypeptide reads, in one-letter code: Eukaryotic peptide chain release factor GTP-binding subunit (685 aa).

Disordered stretches follow at residues 1 to 34 (MSDSNQGNNQQNYQQYSQNGNQQQGNNRYQGYQA), 63 to 99 (YNPDAGYQQQYNPQGGYQQYNPQGGYQQQFNPQGGRG), and 112 to 234 (GYQA…NVTS). Ser-2 carries the N-acetylserine modification. The interaction with PAB1 stretch occupies residues 2 to 239 (SDSNQGNNQQ…ANVTSADALI (238 aa)). Residues 5–135 (NQGNNQQNYQ…LNDFQKQQKQ (131 aa)) are prion domain (PrD). The span at 117–129 (FQPQSQGMSLNDF) shows a compositional bias: polar residues. Residues 139 to 249 (KPKKTLKLVS…KEQEEEVDDE (111 aa)) are charged. The span at 166 to 222 (AESDKKEEEKSAETKEPTKEPTKVEEPVKKEEKPVQTEEKTEEKSELPKVEDLKISE) shows a compositional bias: basic and acidic residues. Residues 223–234 (STHNTNNANVTS) show a composition bias toward polar residues. Residues 258 to 484 (KDHVSLIFMG…YLDTMNHVDR (227 aa)) enclose the tr-type G domain. The G1 stretch occupies residues 267–274 (GHVDAGKS). 267–274 (GHVDAGKS) is a binding site for GTP. The G2 stretch occupies residues 323-327 (GKTIE). The segment at 344–347 (DAPG) is G3. GTP-binding positions include 406–409 (NKMD) and 449–450 (GY). The segment at 406 to 409 (NKMD) is G4. The interval 448-450 (SGY) is G5. Ser-571 carries the phosphoserine modification.

It belongs to the TRAFAC class translation factor GTPase superfamily. Classic translation factor GTPase family. ERF3 subfamily. Heterodimer of two subunits, one of which binds GTP. Interacts with polyadenylate-binding protein PAB1, and TPA1.

The protein resides in the cytoplasm. It catalyses the reaction GTP + H2O = GDP + phosphate + H(+). In terms of biological role, GTPase component of the eRF1-eRF3-GTP ternary complex, a ternary complex that mediates translation termination in response to the termination codons UAA, UAG and UGA. SUP35/eRF3 mediates SUP45/eRF1 delivery to stop codons: The eRF1-eRF3-GTP complex binds to a stop codon in the ribosomal A-site. GTP hydrolysis by SUP35/eRF3 induces a conformational change that leads to its dissociation, permitting SUP45/eRF1 to accommodate fully in the A-site. Recruited by polyadenylate-binding protein PAB1 to poly(A)-tails of mRNAs. Interaction with PAB1 is also required for regulation of normal mRNA decay through translation termination-coupled poly(A) shortening. The protein is Eukaryotic peptide chain release factor GTP-binding subunit (SUP35) of Saccharomyces cerevisiae (strain ATCC 204508 / S288c) (Baker's yeast).